Consider the following 599-residue polypeptide: MTTPAPLTGLLPLNPEQLARLQAATTDLTPEQLAWVSGYFWGVLNPRSGAVAVTPAPEGKMPGVTLISASQTGNARRVAEALRDDLLAANLNVTLVNAGDYKFKQIASEKLLVIVTSTQGEGEPPEEAVALHKFLFSKKAPKLENTAFAVFSLGDTSYEFFCQSGKDFDSKLAELGGERLLDRVDADVEYQAAASEWRARVVDVLKSRAPVAAPSQSVATGSVNDIHTSPYTKDAPLAATLSVNQKITGRNSEKDVRHIEIDLGDSGLRYQPGDALGVWYQNDPALVKELVELLWLKGDEPVTVDGKTLPLAEALEWHFELTVNTANIVENYATLTRSESLLPLVGDKAQLQHYAATTPIVDMVRFSLAQLDAQALIDLLRPLTPRLYSIASAQAEVESEVHITVGVVCYDIEGRARAGGASSFLADRVEEEGEVRVFIEHNDNFRLPANPETPVIMIGPGTGIAPFRAFMQQRAAEGVEGKNWLFFGNPHFTEDFLYQVEWQRYVKEGGLSRIDLAWSRDQKEKIYVQDKLREQGAELWRWINDGAHIYVCGDARRMAADVEKALLEVIAEFGGMDLESADEYLSELRVERRYQRDVY.

In terms of domain architecture, Flavodoxin-like spans 64–202; sequence VTLISASQTG…AASEWRARVV (139 aa). FMN contacts are provided by residues 70–75, 117–120, and 153–162; these read SQTGNA, STQG, and LGDTSYEFFC. The 215-residue stretch at 234-448 folds into the FAD-binding FR-type domain; that stretch reads DAPLAATLSV…IEHNDNFRLP (215 aa). Residues Thr322, Ala356, 386–389, 404–406, Tyr410, and 419–422 each bind FAD; these read RLYS, TVG, and GGAS. Residues 519-520, 525-529, and Asp561 contribute to the NADP(+) site; these read SR and KIYVQ. Tyr599 is an FAD binding site.

The protein belongs to the NADPH-dependent sulphite reductase flavoprotein subunit CysJ family. In the N-terminal section; belongs to the flavodoxin family. It in the C-terminal section; belongs to the flavoprotein pyridine nucleotide cytochrome reductase family. As to quaternary structure, alpha(8)-beta(8). The alpha component is a flavoprotein, the beta component is a hemoprotein. The cofactor is FAD. Requires FMN as cofactor.

It carries out the reaction hydrogen sulfide + 3 NADP(+) + 3 H2O = sulfite + 3 NADPH + 4 H(+). It participates in sulfur metabolism; hydrogen sulfide biosynthesis; hydrogen sulfide from sulfite (NADPH route): step 1/1. Its function is as follows. Component of the sulfite reductase complex that catalyzes the 6-electron reduction of sulfite to sulfide. This is one of several activities required for the biosynthesis of L-cysteine from sulfate. The flavoprotein component catalyzes the electron flow from NADPH -&gt; FAD -&gt; FMN to the hemoprotein component. This is Sulfite reductase [NADPH] flavoprotein alpha-component from Salmonella paratyphi B (strain ATCC BAA-1250 / SPB7).